We begin with the raw amino-acid sequence, 925 residues long: Protein translocase subunit SecA (925 aa).

ATP-binding positions include Q87, 105–109 (GEGKT), and D515. Zn(2+)-binding residues include C909, C911, C920, and H921.

Belongs to the SecA family. As to quaternary structure, monomer and homodimer. Part of the essential Sec protein translocation apparatus which comprises SecA, SecYEG and auxiliary proteins SecDF-YajC and YidC. Zn(2+) is required as a cofactor.

Its subcellular location is the cell inner membrane. The protein localises to the cytoplasm. It catalyses the reaction ATP + H2O + cellular proteinSide 1 = ADP + phosphate + cellular proteinSide 2.. Functionally, part of the Sec protein translocase complex. Interacts with the SecYEG preprotein conducting channel. Has a central role in coupling the hydrolysis of ATP to the transfer of proteins into and across the cell membrane, serving both as a receptor for the preprotein-SecB complex and as an ATP-driven molecular motor driving the stepwise translocation of polypeptide chains across the membrane. The protein is Protein translocase subunit SecA of Cupriavidus necator (strain ATCC 17699 / DSM 428 / KCTC 22496 / NCIMB 10442 / H16 / Stanier 337) (Ralstonia eutropha).